We begin with the raw amino-acid sequence, 647 residues long: Protein FAM161A (647 aa).

Disordered stretches follow at residues Arg32–Glu55 and Pro143–Glu175. A compositionally biased stretch (polar residues) spans Ser152–Glu161. 2 coiled-coil regions span residues Ile243–Lys268 and Ala518–Lys544. 2 disordered regions span residues Gln504–Lys524 and Asp588–Ile647. Composition is skewed to basic and acidic residues over residues Glu510 to Lys524 and Asp588 to Pro600. Positions Asp613–Thr638 are enriched in acidic residues.

Belongs to the FAM161 family.

The protein localises to the cytoplasm. The protein resides in the cytoskeleton. It localises to the cilium basal body. It is found in the cell projection. Its subcellular location is the cilium. The protein localises to the microtubule organizing center. The protein resides in the centrosome. It localises to the centriole. Its function is as follows. Involved in ciliogenesis. This Xenopus laevis (African clawed frog) protein is Protein FAM161A (fam161a).